The sequence spans 153 residues: 3-hydroxyacyl-[acyl-carrier-protein] dehydratase FabZ (153 aa).

Residue histidine 54 is part of the active site.

The protein belongs to the thioester dehydratase family. FabZ subfamily.

It localises to the cytoplasm. The catalysed reaction is a (3R)-hydroxyacyl-[ACP] = a (2E)-enoyl-[ACP] + H2O. Functionally, involved in unsaturated fatty acids biosynthesis. Catalyzes the dehydration of short chain beta-hydroxyacyl-ACPs and long chain saturated and unsaturated beta-hydroxyacyl-ACPs. This is 3-hydroxyacyl-[acyl-carrier-protein] dehydratase FabZ from Shewanella frigidimarina (strain NCIMB 400).